Consider the following 123-residue polypeptide: Non-specific lipid-transfer protein 3 (123 aa).

The first 25 residues, 1–25 (MASSGQLLKLVCLVAVMCCMAVGGP), serve as a signal peptide directing secretion. Disulfide bonds link Cys-33-Cys-80, Cys-43-Cys-57, Cys-58-Cys-105, and Cys-78-Cys-119.

The protein belongs to the plant LTP family.

Functionally, plant non-specific lipid-transfer proteins transfer phospholipids as well as galactolipids across membranes. May play a role in wax or cutin deposition in the cell walls of expanding epidermal cells and certain secretory tissues. The chain is Non-specific lipid-transfer protein 3 from Prunus dulcis (Almond).